Here is a 304-residue protein sequence, read N- to C-terminus: Acetylglutamate kinase (304 aa).

Residues 69–70 (GG), arginine 91, and asparagine 202 each bind substrate.

The protein belongs to the acetylglutamate kinase family. ArgB subfamily.

The protein localises to the cytoplasm. The catalysed reaction is N-acetyl-L-glutamate + ATP = N-acetyl-L-glutamyl 5-phosphate + ADP. Its pathway is amino-acid biosynthesis; L-arginine biosynthesis; N(2)-acetyl-L-ornithine from L-glutamate: step 2/4. Catalyzes the ATP-dependent phosphorylation of N-acetyl-L-glutamate. The sequence is that of Acetylglutamate kinase from Caulobacter vibrioides (strain ATCC 19089 / CIP 103742 / CB 15) (Caulobacter crescentus).